An 89-amino-acid polypeptide reads, in one-letter code: Small ribosomal subunit protein uS15 (89 aa).

Basic and acidic residues predominate over residues 1 to 21 (MAITQERKNQLISEFKTHESD). The disordered stretch occupies residues 1-23 (MAITQERKNQLISEFKTHESDTG).

Belongs to the universal ribosomal protein uS15 family. As to quaternary structure, part of the 30S ribosomal subunit. Forms a bridge to the 50S subunit in the 70S ribosome, contacting the 23S rRNA.

In terms of biological role, one of the primary rRNA binding proteins, it binds directly to 16S rRNA where it helps nucleate assembly of the platform of the 30S subunit by binding and bridging several RNA helices of the 16S rRNA. Its function is as follows. Forms an intersubunit bridge (bridge B4) with the 23S rRNA of the 50S subunit in the ribosome. The protein is Small ribosomal subunit protein uS15 of Bacillus velezensis (strain DSM 23117 / BGSC 10A6 / LMG 26770 / FZB42) (Bacillus amyloliquefaciens subsp. plantarum).